A 154-amino-acid polypeptide reads, in one-letter code: MGVGLSTLEQKLTEMITAPVEALGYELVGIEFIRGRTSTLRIYIDSEDGINVDDCADVSHQVSAVLDVEDPISVAYNLEVSSPGLDRPMFTADHYARFQGEEVALVLRMAVQNRRKWQGIIKAVDGEMITVTVEGKDEVFALSNIQKANLVPHF.

The protein belongs to the RimP family.

It is found in the cytoplasm. Functionally, required for maturation of 30S ribosomal subunits. The polypeptide is Ribosome maturation factor RimP (Salmonella agona (strain SL483)).